The primary structure comprises 1372 residues: Polysaccharide lyase 8 family protein HylA (1372 aa).

Positions M1–A25 are cleaved as a signal peptide. One can recognise an F5/8 type C domain in the interval D63–K172. Residues T183–V242 enclose the BIG2 domain. Active-site residues include H487, Y496, and R550. FIVAR domains lie at K1014–L1075, D1084–L1146, D1155–L1217, and D1226–L1288. Positions L1288–Q1336 are disordered. A compositionally biased stretch (polar residues) spans H1308–G1329. Positions L1338–G1342 match the LPXTG sorting signal motif. The residue at position 1341 (T1341) is a Pentaglycyl murein peptidoglycan amidated threonine. Positions G1342–K1372 are cleaved as a propeptide — removed by sortase.

Belongs to the polysaccharide lyase 8 family.

It localises to the secreted. It is found in the cell wall. Its function is as follows. Has a very modest degradation activity against heparin sodium salt (HS) in vitro. Involved in the pathogenesis of vancomycin-resistant E.faecalis infections. The chain is Polysaccharide lyase 8 family protein HylA from Enterococcus faecalis (strain ATCC 700802 / V583).